The sequence spans 309 residues: Homoserine kinase (309 aa).

91–101 contacts ATP; sequence PIGSGLGSSAC.

It belongs to the GHMP kinase family. Homoserine kinase subfamily.

The protein localises to the cytoplasm. The catalysed reaction is L-homoserine + ATP = O-phospho-L-homoserine + ADP + H(+). The protein operates within amino-acid biosynthesis; L-threonine biosynthesis; L-threonine from L-aspartate: step 4/5. Its function is as follows. Catalyzes the ATP-dependent phosphorylation of L-homoserine to L-homoserine phosphate. The polypeptide is Homoserine kinase (Edwardsiella ictaluri (strain 93-146)).